Here is a 171-residue protein sequence, read N- to C-terminus: Phosphopantetheine adenylyltransferase (171 aa).

Thr-9 is a substrate binding site. Residues 9-10 and His-17 each bind ATP; that span reads TF. Substrate-binding residues include Lys-41, Leu-78, and Arg-92. ATP contacts are provided by residues 93–95, Glu-103, and 128–134; these read GLR and HQAIASK.

The protein belongs to the bacterial CoaD family. In terms of assembly, homohexamer. It depends on Mg(2+) as a cofactor.

Its subcellular location is the cytoplasm. The enzyme catalyses (R)-4'-phosphopantetheine + ATP + H(+) = 3'-dephospho-CoA + diphosphate. The protein operates within cofactor biosynthesis; coenzyme A biosynthesis; CoA from (R)-pantothenate: step 4/5. Functionally, reversibly transfers an adenylyl group from ATP to 4'-phosphopantetheine, yielding dephospho-CoA (dPCoA) and pyrophosphate. The chain is Phosphopantetheine adenylyltransferase from Dinoroseobacter shibae (strain DSM 16493 / NCIMB 14021 / DFL 12).